A 129-amino-acid polypeptide reads, in one-letter code: Basic blue protein (129 aa).

The N-terminal stretch at 1–33 (MAKGRGSASWSARAIVTLMAVSVLLLQADYVQA) is a signal peptide. A Phytocyanin domain is found at 34–129 (ATYTVGDSGI…SDMKIAVTAV (96 aa)). Positions 72, 112, 117, and 122 each coordinate Cu cation. A disulfide bridge connects residues cysteine 85 and cysteine 118.

In terms of tissue distribution, expressed in the inflorescence and in the transmitting tract of the pistil. Detected in roots, stems, cauline leaves, cotyledons, hypocotyls, guard cells, pistils, sepals, stamen filaments and vascular bundles of roots but not of leaves. Not expressed in petals, anthers or pollen.

It localises to the secreted. It is found in the extracellular space. The protein resides in the extracellular matrix. Forms a concentration gradient along the pollen tube growth path, with a lower level in the stigma papilla cell wall and a higher level in the transmitting tract extracellular matix of the style. The chain is Basic blue protein (ARPN) from Arabidopsis thaliana (Mouse-ear cress).